The following is a 526-amino-acid chain: uncharacterized protein (526 aa).

2 WD repeats span residues 210–248 (SMEQ…HHDT) and 452–491 (SHNS…LIDS).

This is an uncharacterized protein from Acanthamoeba polyphaga mimivirus (APMV).